The chain runs to 165 residues: HTH-type transcriptional regulator IscR (165 aa).

The region spanning 2-131 is the HTH rrf2-type domain; that stretch reads RLTSKGRYAV…NNITLAELVS (130 aa). Positions 28–51 form a DNA-binding region, H-T-H motif; it reads LAEISERQGISLSYLEQLFSRLRK. [2Fe-2S] cluster contacts are provided by Cys-92, Cys-98, and Cys-104. The tract at residues 144–165 is disordered; sequence NDTRRPLTNGRPQETINVNLHA. The segment covering 153 to 165 has biased composition (polar residues); sequence GRPQETINVNLHA.

[2Fe-2S] cluster serves as cofactor.

Its function is as follows. Regulates the transcription of several operons and genes involved in the biogenesis of Fe-S clusters and Fe-S-containing proteins. The polypeptide is HTH-type transcriptional regulator IscR (Sodalis glossinidius (strain morsitans)).